Consider the following 337-residue polypeptide: Meiotic driver wtf4 (337 aa).

Basic and acidic residues predominate over residues 1 to 29 (MKNKDYPLRSSMDELSTKNDNEIDLEKGP). The disordered stretch occupies residues 1 to 40 (MKNKDYPLRSSMDELSTKNDNEIDLEKGPLPEYNSEDEST). 6 helical membrane passes run 89-109 (LLIS…CVNP), 119-139 (AFFV…FCFF), 149-169 (CIKV…VGLY), 176-196 (VVII…RSKF), 210-230 (CSIS…FWTL), and 234-254 (FSGL…TKGL).

Belongs to the WTF family. As to quaternary structure, homomer. Forms protein aggregates. The two isoforms can interact with each other and with themselves. High sequence similarity is required for their interaction.

It is found in the spore membrane. The protein localises to the vacuole membrane. It localises to the ascus epiplasm. Its subcellular location is the cytoplasm. The protein resides in the endoplasmic reticulum membrane. Promotes unequal transmission of alleles from the parental zygote to progeny spores by acting as poison/antidote system where the poison and antidote proteins are produced from the same locus; the poison component is trans-acting and targets all spores within an ascus whereas the antidote component is spore-specific, leading to poisoning of all progeny that do not inherit the allele. Its function is as follows. Localizes isoform 2 to the vacuole thereby facilitating its degradation. In terms of biological role, forms toxic aggregates that disrupt spore maturation. The sequence is that of Meiotic driver wtf4 from Schizosaccharomyces kambucha (Fission yeast).